Here is a 99-residue protein sequence, read N- to C-terminus: DNA-binding protein Fis (99 aa).

Residues 1–25 form a disordered region; sequence MFEQKISSEALTTTTSIPATGQITQ. Residues 75-94 constitute a DNA-binding region (H-T-H motif); that stretch reads QTRAATMLGINRGTLRKKLK.

Belongs to the transcriptional regulatory Fis family. In terms of assembly, homodimer.

Activates ribosomal RNA transcription. Plays a direct role in upstream activation of rRNA promoters. This is DNA-binding protein Fis from Psychromonas ingrahamii (strain DSM 17664 / CCUG 51855 / 37).